A 239-amino-acid chain; its full sequence is tRNA (guanine-N(1)-)-methyltransferase (239 aa).

S-adenosyl-L-methionine contacts are provided by residues glycine 108 and 127–132; that span reads LGDYVL.

Belongs to the RNA methyltransferase TrmD family. In terms of assembly, homodimer.

It is found in the cytoplasm. It carries out the reaction guanosine(37) in tRNA + S-adenosyl-L-methionine = N(1)-methylguanosine(37) in tRNA + S-adenosyl-L-homocysteine + H(+). In terms of biological role, specifically methylates guanosine-37 in various tRNAs. The protein is tRNA (guanine-N(1)-)-methyltransferase of Streptococcus pneumoniae serotype 2 (strain D39 / NCTC 7466).